The chain runs to 389 residues: Cytochrome b (389 aa).

4 helical membrane passes run 32–52 (FGSL…FLAM), 76–98 (WLIR…LHIA), 113–133 (TWTI…LGYT), and 179–199 (FFSL…MHMI). Residues histidine 82 and histidine 96 each contribute to the heme b site. Residues histidine 183 and histidine 197 each coordinate heme b. Histidine 202 is an a ubiquinone binding site. 4 consecutive transmembrane segments (helical) span residues 225–245 (YLIK…IIIF), 289–309 (LFGV…PLLD), 321–341 (IGKL…FIGA), and 348–368 (YVAI…FFIP).

It belongs to the cytochrome b family. As to quaternary structure, fungal cytochrome b-c1 complex contains 10 subunits; 3 respiratory subunits, 2 core proteins and 5 low-molecular weight proteins. Cytochrome b-c1 complex is a homodimer. Heme b is required as a cofactor.

Its subcellular location is the mitochondrion inner membrane. Component of the ubiquinol-cytochrome c reductase complex (complex III or cytochrome b-c1 complex) that is part of the mitochondrial respiratory chain. The b-c1 complex mediates electron transfer from ubiquinol to cytochrome c. Contributes to the generation of a proton gradient across the mitochondrial membrane that is then used for ATP synthesis. In Schizosaccharomyces japonicus (Fission yeast), this protein is Cytochrome b (cob).